A 531-amino-acid chain; its full sequence is Peptide chain release factor 3 (531 aa).

The 269-residue stretch at alanine 10–leucine 278 folds into the tr-type G domain. GTP contacts are provided by residues serine 19–threonine 26, aspartate 87–histidine 91, and asparagine 141–aspartate 144.

It belongs to the TRAFAC class translation factor GTPase superfamily. Classic translation factor GTPase family. PrfC subfamily.

Its subcellular location is the cytoplasm. Its function is as follows. Increases the formation of ribosomal termination complexes and stimulates activities of RF-1 and RF-2. It binds guanine nucleotides and has strong preference for UGA stop codons. It may interact directly with the ribosome. The stimulation of RF-1 and RF-2 is significantly reduced by GTP and GDP, but not by GMP. The sequence is that of Peptide chain release factor 3 from Thioalkalivibrio sulfidiphilus (strain HL-EbGR7).